Reading from the N-terminus, the 396-residue chain is Tryptophan synthase beta chain (396 aa).

Residue lysine 88 is modified to N6-(pyridoxal phosphate)lysine.

This sequence belongs to the TrpB family. As to quaternary structure, tetramer of two alpha and two beta chains. The cofactor is pyridoxal 5'-phosphate.

The catalysed reaction is (1S,2R)-1-C-(indol-3-yl)glycerol 3-phosphate + L-serine = D-glyceraldehyde 3-phosphate + L-tryptophan + H2O. It functions in the pathway amino-acid biosynthesis; L-tryptophan biosynthesis; L-tryptophan from chorismate: step 5/5. Functionally, the beta subunit is responsible for the synthesis of L-tryptophan from indole and L-serine. The sequence is that of Tryptophan synthase beta chain from Shewanella baltica (strain OS185).